A 145-amino-acid chain; its full sequence is Small ribosomal subunit protein uS12 (145 aa).

This sequence belongs to the universal ribosomal protein uS12 family. In terms of assembly, component of the small ribosomal subunit. Mature ribosomes consist of a small (40S) and a large (60S) subunit. The 40S subunit contains about 32 different proteins and 1 molecule of RNA (18S). The 60S subunit contains 45 different proteins and 3 molecules of RNA (25S, 5.8S and 5S).

It is found in the cytoplasm. Functionally, component of the ribosome, a large ribonucleoprotein complex responsible for the synthesis of proteins in the cell. The small ribosomal subunit (SSU) binds messenger RNAs (mRNAs) and translates the encoded message by selecting cognate aminoacyl-transfer RNA (tRNA) molecules. The large subunit (LSU) contains the ribosomal catalytic site termed the peptidyl transferase center (PTC), which catalyzes the formation of peptide bonds, thereby polymerizing the amino acids delivered by tRNAs into a polypeptide chain. The nascent polypeptides leave the ribosome through a tunnel in the LSU and interact with protein factors that function in enzymatic processing, targeting, and the membrane insertion of nascent chains at the exit of the ribosomal tunnel. The sequence is that of Small ribosomal subunit protein uS12 (RPS23A) from Candida albicans (strain SC5314 / ATCC MYA-2876) (Yeast).